Here is a 154-residue protein sequence, read N- to C-terminus: UPF0225 protein SG1365 (154 aa).

Belongs to the UPF0225 family.

The sequence is that of UPF0225 protein SG1365 from Sodalis glossinidius (strain morsitans).